Reading from the N-terminus, the 431-residue chain is Selenocysteine lyase (431 aa).

An N6-(pyridoxal phosphate)lysine modification is found at Lys239. Catalysis depends on Cys367, which acts as the S-selanylcysteine intermediate.

The protein belongs to the class-V pyridoxal-phosphate-dependent aminotransferase family. In terms of assembly, homodimer. It depends on pyridoxal 5'-phosphate as a cofactor.

The protein localises to the cytoplasm. It localises to the cytosol. It catalyses the reaction L-selenocysteine + AH2 = hydrogenselenide + L-alanine + A + H(+). Catalyzes the decomposition of L-selenocysteine to L-alanine and elemental selenium. The polypeptide is Selenocysteine lyase (scly) (Xenopus tropicalis (Western clawed frog)).